The following is a 158-amino-acid chain: NADH-quinone oxidoreductase subunit B 1 (158 aa).

Residues Cys37, Cys38, Cys102, and Cys132 each coordinate [4Fe-4S] cluster.

The protein belongs to the complex I 20 kDa subunit family. In terms of assembly, NDH-1 is composed of 14 different subunits. Subunits NuoB, C, D, E, F, and G constitute the peripheral sector of the complex. Requires [4Fe-4S] cluster as cofactor.

It is found in the cell inner membrane. It catalyses the reaction a quinone + NADH + 5 H(+)(in) = a quinol + NAD(+) + 4 H(+)(out). Functionally, NDH-1 shuttles electrons from NADH, via FMN and iron-sulfur (Fe-S) centers, to quinones in the respiratory chain. Couples the redox reaction to proton translocation (for every two electrons transferred, four hydrogen ions are translocated across the cytoplasmic membrane), and thus conserves the redox energy in a proton gradient. The sequence is that of NADH-quinone oxidoreductase subunit B 1 from Chromobacterium violaceum (strain ATCC 12472 / DSM 30191 / JCM 1249 / CCUG 213 / NBRC 12614 / NCIMB 9131 / NCTC 9757 / MK).